A 209-amino-acid polypeptide reads, in one-letter code: uncharacterized protein (209 aa).

6 4Fe-4S ferredoxin-type domains span residues 38-67, 63-92, 90-119, 122-151, 145-174, and 179-209; these read KTKP…IFSF, KIFS…KDRF, DRFT…KEIP, KTPV…EINP, INKE…TPDE, and LIVK…HRES. Residues C47, C50, C53, C57, C72, C75, C78, C82, C99, C102, C105, and C109 each contribute to the [4Fe-4S] cluster site. [4Fe-4S] cluster contacts are provided by C154, C157, C160, C164, C188, C191, C194, and C198.

This is an uncharacterized protein from Methanocaldococcus jannaschii (strain ATCC 43067 / DSM 2661 / JAL-1 / JCM 10045 / NBRC 100440) (Methanococcus jannaschii).